Consider the following 384-residue polypeptide: MTFVVSVNAANPTPKVKKPTVARSIPSPTSLPLPDEIIVNCFAYIPRCDYPSLSLVSKTFNRLITSIELNIVRSLFQRTENVLYVALRFSHEEDPIWYTLNQKPYKNKSNSCIHKLVPLPSCPSLPCWGSSVIAIGHKIYVFGGCINGDMTSNVFVIDCLHGTFQFLPSMRVPRGCAAFGIVDGKIYVIGGYNKADSLDNWVEVFDLEKQTWESFSGLCNEELSKITLKSVVMNKKIYIMDRGNGIVFDPKKGVWERDFLLDRDWVVGSCVIDNMLYTFGFDSVKRIYRVRVYDPSVRVWSFVKGIEDIPKMDGTLGSRMANHGGKLVILLNLDKNGGTELWCIKIALERRGQQGEIWGKILWYNLVLTLENSSTIVECFDITI.

One can recognise an F-box domain in the interval 27 to 79 (SPTSLPLPDEIIVNCFAYIPRCDYPSLSLVSKTFNRLITSIELNIVRSLFQRT). Kelch repeat units lie at residues 138 to 184 (KIYV…IVDG), 185 to 235 (KIYV…VMNK), 237 to 274 (IYIM…VIDN), and 275 to 323 (MLYT…MANH).

In Arabidopsis thaliana (Mouse-ear cress), this protein is Putative F-box/kelch-repeat protein At3g27910.